Reading from the N-terminus, the 155-residue chain is Ribonuclease H (155 aa).

Residues 1 to 146 form the RNase H type-1 domain; sequence MNALFAWTDG…ADELARAGMA (146 aa). Residues D9, E52, D74, and D138 each contribute to the Mg(2+) site.

It belongs to the RNase H family. Monomer. It depends on Mg(2+) as a cofactor.

The protein resides in the cytoplasm. It carries out the reaction Endonucleolytic cleavage to 5'-phosphomonoester.. In terms of biological role, endonuclease that specifically degrades the RNA of RNA-DNA hybrids. This chain is Ribonuclease H, found in Paracoccus denitrificans (strain Pd 1222).